Reading from the N-terminus, the 350-residue chain is Uroporphyrinogen decarboxylase (350 aa).

Substrate contacts are provided by residues 28–32, Asp78, Tyr154, Thr209, and His325; that span reads RQAGR.

The protein belongs to the uroporphyrinogen decarboxylase family. As to quaternary structure, homodimer.

The protein localises to the cytoplasm. The enzyme catalyses uroporphyrinogen III + 4 H(+) = coproporphyrinogen III + 4 CO2. It functions in the pathway porphyrin-containing compound metabolism; protoporphyrin-IX biosynthesis; coproporphyrinogen-III from 5-aminolevulinate: step 4/4. Its function is as follows. Catalyzes the decarboxylation of four acetate groups of uroporphyrinogen-III to yield coproporphyrinogen-III. The chain is Uroporphyrinogen decarboxylase from Nitrobacter hamburgensis (strain DSM 10229 / NCIMB 13809 / X14).